The sequence spans 524 residues: Cytosolic Fe-S cluster assembly factor NAR1 (524 aa).

Cysteine 20, cysteine 52, cysteine 55, cysteine 58, cysteine 158, and cysteine 206 together coordinate [4Fe-4S] cluster. A disordered region spans residues 362 to 388 (IRKRPTANGNDNSISLSSSINNQDNNN). A compositionally biased stretch (low complexity) spans 369 to 388 (NGNDNSISLSSSINNQDNNN). 2 residues coordinate [4Fe-4S] cluster: cysteine 408 and cysteine 412. Residues 501–524 (SSISETHNGDSKNTIEQPVQFTTW) are disordered.

The protein belongs to the NARF family.

Its function is as follows. Component of the cytosolic Fe/S protein assembly machinery. Required for maturation of extramitochondrial Fe/S proteins. May play a role in the transfer of pre-assembled Fe/S clusters to target apoproteins. This chain is Cytosolic Fe-S cluster assembly factor NAR1 (NAR1), found in Vanderwaltozyma polyspora (strain ATCC 22028 / DSM 70294 / BCRC 21397 / CBS 2163 / NBRC 10782 / NRRL Y-8283 / UCD 57-17) (Kluyveromyces polysporus).